Consider the following 153-residue polypeptide: Vasotocin-neurophysin VT 1 (153 aa).

The first 20 residues, 1-20 (MPYSTFPLLWVLGLLALSSA), serve as a signal peptide directing secretion. Cysteine 21 and cysteine 26 are disulfide-bonded. Glycine 29 is subject to Glycine amide. Intrachain disulfides connect cysteine 41–cysteine 85, cysteine 44–cysteine 58, cysteine 52–cysteine 75, cysteine 59–cysteine 65, cysteine 92–cysteine 104, cysteine 98–cysteine 116, and cysteine 105–cysteine 110.

This sequence belongs to the vasopressin/oxytocin family. Post-translationally, seven disulfide bonds are present in neurophysin.

The protein localises to the secreted. In terms of biological role, vasotocin is an antidiuretic hormone. In Oncorhynchus keta (Chum salmon), this protein is Vasotocin-neurophysin VT 1.